The sequence spans 474 residues: Ankyrin repeat, SAM and basic leucine zipper domain-containing protein 1 (474 aa).

The interval 1-31 (MAGRLRGPAVPGGGESSDSDEDGWDIGYTER) is disordered. S16, S17, and S19 each carry phosphoserine. 6 ANK repeats span residues 43–72 (EKDEVLKRALTTGDGSLLEELLNSGMQVDS), 76–105 (FGWTPLMYAASIANVDLVRILLDRGANASF), 108–142 (DQHTVLMAACSARVPEERILKTAELLLSRNASPNA), 146–175 (KRMSPLMYAAREGHSQLVALLVGHGAEINA), 179–208 (NGYTALAWAARHGHKTTVLKLLELGADKTL), and 212–241 (DGKTPAEIAKRNKHPELFSMLSLTLNPLHG). The SAM domain maps to 270 to 333 (SYSAFGDLEI…KIMDAVEELQ (64 aa)).

In terms of assembly, interacts with DDX4, PIWIL1, RANBP9 and TDRD1.

Its subcellular location is the cytoplasm. Its function is as follows. Plays a central role during spermatogenesis by repressing transposable elements and preventing their mobilization, which is essential for the germline integrity. Acts via the piRNA metabolic process, which mediates the repression of transposable elements during meiosis by forming complexes composed of piRNAs and Piwi proteins and governs the methylation and subsequent repression of transposons. Its association with pi-bodies suggests a participation in the primary piRNAs metabolic process. Required prior to the pachytene stage to facilitate the production of multiple types of piRNAs, including those associated with repeats involved in the regulation of retrotransposons. May act by mediating protein-protein interactions during germ cell maturation. In Ornithorhynchus anatinus (Duckbill platypus), this protein is Ankyrin repeat, SAM and basic leucine zipper domain-containing protein 1 (ASZ1).